The primary structure comprises 137 residues: Structural protein A137R (137 aa).

This sequence belongs to the asfivirus A137R family. In terms of assembly, interacts with host TBK1.

It is found in the virion. Its subcellular location is the host cytoplasm. Plays a role in the inhibition of the host innate immune response. Mechanistically, promotes the autophagy-mediated lysosomal degradation of host TBK1 and affects IRF3 nuclear translocation to block type I IFN production. This Ornithodoros (relapsing fever ticks) protein is Structural protein A137R.